The following is a 119-amino-acid chain: Holo-[acyl-carrier-protein] synthase (119 aa).

2 residues coordinate Mg(2+): Asp8 and Glu58.

It belongs to the P-Pant transferase superfamily. AcpS family. Requires Mg(2+) as cofactor.

Its subcellular location is the cytoplasm. It carries out the reaction apo-[ACP] + CoA = holo-[ACP] + adenosine 3',5'-bisphosphate + H(+). Its function is as follows. Transfers the 4'-phosphopantetheine moiety from coenzyme A to a Ser of acyl-carrier-protein. This Streptococcus suis (strain 05ZYH33) protein is Holo-[acyl-carrier-protein] synthase.